The sequence spans 601 residues: Elongation factor 4 (601 aa).

The 183-residue stretch at 7 to 189 folds into the tr-type G domain; it reads KHTRNFSIVA…AIVEKVPVPD (183 aa). GTP-binding positions include 19–24 and 136–139; these read DHGKST and NKID.

Belongs to the TRAFAC class translation factor GTPase superfamily. Classic translation factor GTPase family. LepA subfamily.

It is found in the cell membrane. It catalyses the reaction GTP + H2O = GDP + phosphate + H(+). Functionally, required for accurate and efficient protein synthesis under certain stress conditions. May act as a fidelity factor of the translation reaction, by catalyzing a one-codon backward translocation of tRNAs on improperly translocated ribosomes. Back-translocation proceeds from a post-translocation (POST) complex to a pre-translocation (PRE) complex, thus giving elongation factor G a second chance to translocate the tRNAs correctly. Binds to ribosomes in a GTP-dependent manner. The polypeptide is Elongation factor 4 (Clostridium novyi (strain NT)).